Reading from the N-terminus, the 211-residue chain is Small ribosomal subunit protein uS3 (211 aa).

The KH type-2 domain maps to I16–E85.

It belongs to the universal ribosomal protein uS3 family. Part of the 30S ribosomal subunit.

In terms of biological role, binds the lower part of the 30S subunit head. The sequence is that of Small ribosomal subunit protein uS3 from Methanococcus vannielii (strain ATCC 35089 / DSM 1224 / JCM 13029 / OCM 148 / SB).